The following is a 90-amino-acid chain: MQYCELDLSGQWLDTVYCEENFSDFVFIKFLNPSQFEEKIYCYTLHITKRTLENKRLLLYYEDEFKKHGHDINELVGDGIILRSCWNPRQ.

The protein resides in the cytoplasm. This is an uncharacterized protein from Saccharomyces cerevisiae (strain ATCC 204508 / S288c) (Baker's yeast).